We begin with the raw amino-acid sequence, 542 residues long: Chaperonin GroEL (542 aa).

Residues 29 to 32, 86 to 90, glycine 413, 478 to 480, and aspartate 494 each bind ATP; these read TLGP, DGTTT, and DAL.

It belongs to the chaperonin (HSP60) family. Forms a cylinder of 14 subunits composed of two heptameric rings stacked back-to-back. Interacts with the co-chaperonin GroES.

The protein localises to the cytoplasm. The catalysed reaction is ATP + H2O + a folded polypeptide = ADP + phosphate + an unfolded polypeptide.. In terms of biological role, together with its co-chaperonin GroES, plays an essential role in assisting protein folding. The GroEL-GroES system forms a nano-cage that allows encapsulation of the non-native substrate proteins and provides a physical environment optimized to promote and accelerate protein folding. In Clostridioides difficile (strain 630) (Peptoclostridium difficile), this protein is Chaperonin GroEL.